The chain runs to 122 residues: Large ribosomal subunit protein uL14 (122 aa).

Belongs to the universal ribosomal protein uL14 family. In terms of assembly, part of the 50S ribosomal subunit. Forms a cluster with proteins L3 and L19. In the 70S ribosome, L14 and L19 interact and together make contacts with the 16S rRNA in bridges B5 and B8.

Binds to 23S rRNA. Forms part of two intersubunit bridges in the 70S ribosome. This is Large ribosomal subunit protein uL14 from Paraburkholderia phymatum (strain DSM 17167 / CIP 108236 / LMG 21445 / STM815) (Burkholderia phymatum).